A 154-amino-acid chain; its full sequence is Ascorbate-specific PTS system EIIA component (154 aa).

The region spanning 6-150 is the PTS EIIA type-2 domain; it reads SLAENKSIRL…QEVLDLIDRT (145 aa). The active-site Tele-phosphohistidine intermediate is H68. H68 is subject to Phosphohistidine.

It is found in the cytoplasm. The phosphoenolpyruvate-dependent sugar phosphotransferase system (sugar PTS), a major carbohydrate active transport system, catalyzes the phosphorylation of incoming sugar substrates concomitantly with their translocation across the cell membrane. The enzyme II UlaABC PTS system is involved in ascorbate transport. The protein is Ascorbate-specific PTS system EIIA component (ulaC) of Escherichia coli O157:H7.